Consider the following 1051-residue polypeptide: Probable valine--tRNA ligase, mitochondrial (1051 aa).

A mitochondrion-targeting transit peptide spans 1 to 20; the sequence is MNKLLFLSKKSSTSNLYRFY. The 'HIGH' region motif lies at 71–81; sequence PNVTGSLHIGH. A 'KMSKS' region motif is present at residues 606–610; it reads KMSKS. Lysine 609 serves as a coordination point for ATP. Positions 972 to 1019 form a coiled coil; it reads KELQISIEFDKEINNQLNQKLINPNQSNDKKILKLENFIKQLQDEIDN.

This sequence belongs to the class-I aminoacyl-tRNA synthetase family.

The protein localises to the mitochondrion. The enzyme catalyses tRNA(Val) + L-valine + ATP = L-valyl-tRNA(Val) + AMP + diphosphate. This is Probable valine--tRNA ligase, mitochondrial (valS2) from Dictyostelium discoideum (Social amoeba).